Consider the following 140-residue polypeptide: MSVWGAWKPNTPVGYKELKSSEIIDTQIMDEALKRRTTIVLCLLSAFPRDICRDILRRTSSHIVGLGRSRYARRRRALQIGRCERCYRVYPPVCGSKCDNKTCRPGLSINTNVANYIDHGVTEVIPWISPHRGQFYLRPK.

Residues 73–76 are basic; it reads RRRR. 2 C4-type zinc fingers span residues 83-98 and 83-103; these read CERCYRVYPPVCGSKC and CERCYRVYPPVCGSKCDNKTC.

It belongs to the carlaviruses nucleic acid-binding protein family.

Functionally, suppressor of viral-induced RNA silencing. The potential mechanism of action is based on sequestering siRNAs. In Lily symptomless virus (LSV), this protein is RNA silencing suppressor.